The primary structure comprises 195 residues: Holliday junction branch migration complex subunit RuvA (195 aa).

Residues 1-64 are domain I; that stretch reads MIASIRGIIQ…EDALTLYGFS (64 aa). The domain II stretch occupies residues 65–142; that stretch reads DPAQRNLFEQ…DLRQLSGTTP (78 aa). Residues 143 to 151 are flexible linker; it reads GNVSTLDRE. Positions 151-195 are domain III; it reads ELTDILISLGYSATEAAAAIAALPGDAPPTLEERLRLALRYFGSA.

The protein belongs to the RuvA family. Homotetramer. Forms an RuvA(8)-RuvB(12)-Holliday junction (HJ) complex. HJ DNA is sandwiched between 2 RuvA tetramers; dsDNA enters through RuvA and exits via RuvB. An RuvB hexamer assembles on each DNA strand where it exits the tetramer. Each RuvB hexamer is contacted by two RuvA subunits (via domain III) on 2 adjacent RuvB subunits; this complex drives branch migration. In the full resolvosome a probable DNA-RuvA(4)-RuvB(12)-RuvC(2) complex forms which resolves the HJ.

Its subcellular location is the cytoplasm. Its function is as follows. The RuvA-RuvB-RuvC complex processes Holliday junction (HJ) DNA during genetic recombination and DNA repair, while the RuvA-RuvB complex plays an important role in the rescue of blocked DNA replication forks via replication fork reversal (RFR). RuvA specifically binds to HJ cruciform DNA, conferring on it an open structure. The RuvB hexamer acts as an ATP-dependent pump, pulling dsDNA into and through the RuvAB complex. HJ branch migration allows RuvC to scan DNA until it finds its consensus sequence, where it cleaves and resolves the cruciform DNA. This chain is Holliday junction branch migration complex subunit RuvA, found in Chloroflexus aurantiacus (strain ATCC 29364 / DSM 637 / Y-400-fl).